The following is a 667-amino-acid chain: WD40 repeat-containing protein DDB_G0271002 (667 aa).

2 WD repeats span residues 165 to 204 and 210 to 249; these read NHGV…PQET and KHKH…LLRI. A compositionally biased stretch (low complexity) spans 278-293; it reads SSNSRDNNNNNSNSNN. Disordered stretches follow at residues 278–301, 316–345, and 389–440; these read SSNS…GIII, LVEN…DNDD, and DIIF…ATTT. Over residues 325-345 the composition is skewed to acidic residues; it reads PMPEEEEEEEEEEVNQVDNDD. A compositionally biased stretch (low complexity) spans 400–410; sequence NQHQQQQQQNQ. Acidic residues predominate over residues 411-428; that stretch reads EIEEEGQEGQEEQEDGTE. A compositionally biased stretch (low complexity) spans 429–440; it reads NENNQGTIATTT.

The chain is WD40 repeat-containing protein DDB_G0271002 from Dictyostelium discoideum (Social amoeba).